The primary structure comprises 130 residues: Albumin-1 B (130 aa).

Positions 1–26 are cleaved as a signal peptide; sequence MASVKLASLMVLFATLGMFLTKNVGA. 3 disulfide bridges follow: Cys29-Cys46, Cys33-Cys48, and Cys41-Cys58. 2 propeptides span residues 64 to 69 and 123 to 130; these read VFLRTN and LLKSVSTA.

In terms of processing, the C-terminal glycine may be removed from PA1b. As to expression, major component of both the cotyledons and embryonic axes of mature seeds.

Functionally, PA1b binds to basic 7S globulin (BG) and stimulates its phosphorylation activity. Involved in the signal transduction system to regulate the growth and differentiation as a hormone peptide. Toxic to various insects through binding to a high affinity binding site in the insect gut. This Pisum sativum (Garden pea) protein is Albumin-1 B.